The sequence spans 296 residues: tRNA dimethylallyltransferase (296 aa).

11 to 18 (GPTAVGKT) lines the ATP pocket. 13–18 (TAVGKT) provides a ligand contact to substrate. An interaction with substrate tRNA region spans residues 36-39 (DSQQ).

The protein belongs to the IPP transferase family. Monomer. Mg(2+) serves as cofactor.

The catalysed reaction is adenosine(37) in tRNA + dimethylallyl diphosphate = N(6)-dimethylallyladenosine(37) in tRNA + diphosphate. In terms of biological role, catalyzes the transfer of a dimethylallyl group onto the adenine at position 37 in tRNAs that read codons beginning with uridine, leading to the formation of N6-(dimethylallyl)adenosine (i(6)A). This Streptococcus agalactiae serotype III (strain NEM316) protein is tRNA dimethylallyltransferase.